Reading from the N-terminus, the 347-residue chain is Protein RecA (347 aa).

64-71 provides a ligand contact to ATP; it reads GPESSGKT.

This sequence belongs to the RecA family.

The protein resides in the cytoplasm. Functionally, can catalyze the hydrolysis of ATP in the presence of single-stranded DNA, the ATP-dependent uptake of single-stranded DNA by duplex DNA, and the ATP-dependent hybridization of homologous single-stranded DNAs. It interacts with LexA causing its activation and leading to its autocatalytic cleavage. The sequence is that of Protein RecA from Bacillus velezensis (strain DSM 23117 / BGSC 10A6 / LMG 26770 / FZB42) (Bacillus amyloliquefaciens subsp. plantarum).